The chain runs to 330 residues: Malate dehydrogenase (330 aa).

An NAD(+)-binding site is contributed by 13 to 19 (GAAGQIG). 2 residues coordinate substrate: Arg-94 and Arg-100. Residues Asn-107, Gln-114, and 131-133 (VGN) each bind NAD(+). Substrate contacts are provided by Asn-133 and Arg-164. His-189 (proton acceptor) is an active-site residue.

Belongs to the LDH/MDH superfamily. MDH type 2 family.

It catalyses the reaction (S)-malate + NAD(+) = oxaloacetate + NADH + H(+). Its function is as follows. Catalyzes the reversible oxidation of malate to oxaloacetate. This chain is Malate dehydrogenase, found in Deinococcus deserti (strain DSM 17065 / CIP 109153 / LMG 22923 / VCD115).